Here is a 768-residue protein sequence, read N- to C-terminus: MKLLWQAKMSSIQDWGEEVEEGAVYHVTLKRVQIQQAANKGARWLGVEGDQLPPGHTVSQYETCKIRTIKAGTLEKLVENLLTAFGDNDFTYISIFLSTYRGFASTKEVLELLLDRYGNLTSPNCEEDGSQSSSESKMVIRNAIASILRAWLDQCAEDFREPPHFPCLQKLLDYLTRMMPGSDPERRAQNLLEQFQKQEVETDNGLPNTISFSLEEEEELEGGESAEFTCFSEDLVAEQLTYMDAQLFKKVVPHHCLGCIWSRRDKKENKHLAPTIRATISQFNTLTKCVVSTILGGKELKTQQRAKIIEKWINIAHECRLLKNFSSLRAIVSALQSNSIYRLKKTWAAVPRDRMLMFEELSDIFSDHNNHLTSRELLMKEGTSKFANLDSSVKENQKRTQRRLQLQKDMGVMQGTVPYLGTFLTDLTMLDTALQDYIEGGLINFEKRRREFEVIAQIKLLQSACNSYCMTPDQKFIQWFQRQQLLTEEESYALSCEIEAAADASTTSPKPRKSMVKRLSLLFLGSDMITSPTPTKEQPKSTASGSSGESMDSVSVSSCESNHSEAEEGSITPMDTPDEPQKKLSESSSSCSSIHSMDTNSSGMSSLINPLSSPPSCNNNPKIHKRSVSVTSITSTVLPPVYNQQNEDTCIIRISVEDNNGNMYKSIMLTSQDKTPAVIQRAMLKHNLDSDPAEEYELVQVISEDKELVIPDSANVFYAMNSQVNFDFILRKKNSMEEQVKLRSRTSLTLPRTAKRGCWSNRHSKITL.

The region spanning 65–196 (KIRTIKAGTL…RAQNLLEQFQ (132 aa)) is the N-terminal Ras-GEF domain. Positions 232 to 501 (SEDLVAEQLT…YALSCEIEAA (270 aa)) constitute a Ras-GEF domain. Ser520 is modified (phosphoserine). The interval 528–623 (MITSPTPTKE…PPSCNNNPKI (96 aa)) is disordered. 3 stretches are compositionally biased toward low complexity: residues 541 to 561 (STASGSSGESMDSVSVSSCES), 586 to 596 (ESSSSCSSIHS), and 605 to 621 (SSLINPLSSPPSCNNNP). One can recognise a Ras-associating domain in the interval 648–735 (DTCIIRISVE…FDFILRKKNS (88 aa)).

As to quaternary structure, interacts with Ras. Expressed in a wide variety of tissues with strong expression being seen in the heart, brain, kidney, spleen and testis.

In terms of biological role, probable guanine nucleotide exchange factor. This chain is Ral guanine nucleotide dissociation stimulator-like 1 (RGL1), found in Homo sapiens (Human).